A 431-amino-acid chain; its full sequence is 5-methylthioadenosine/S-adenosylhomocysteine deaminase (431 aa).

His66 and His68 together coordinate Zn(2+). The substrate site is built by Glu95, Arg147, and His185. His212 is a Zn(2+) binding site. Residues Glu215 and Asp300 each coordinate substrate. Asp300 is a Zn(2+) binding site.

The protein belongs to the metallo-dependent hydrolases superfamily. MTA/SAH deaminase family. Zn(2+) is required as a cofactor.

The catalysed reaction is S-adenosyl-L-homocysteine + H2O + H(+) = S-inosyl-L-homocysteine + NH4(+). The enzyme catalyses S-methyl-5'-thioadenosine + H2O + H(+) = S-methyl-5'-thioinosine + NH4(+). Functionally, catalyzes the deamination of 5-methylthioadenosine and S-adenosyl-L-homocysteine into 5-methylthioinosine and S-inosyl-L-homocysteine, respectively. Is also able to deaminate adenosine. The chain is 5-methylthioadenosine/S-adenosylhomocysteine deaminase from Acetivibrio thermocellus (strain ATCC 27405 / DSM 1237 / JCM 9322 / NBRC 103400 / NCIMB 10682 / NRRL B-4536 / VPI 7372) (Clostridium thermocellum).